The chain runs to 238 residues: Small ribosomal subunit protein uS2c (238 aa).

This sequence belongs to the universal ribosomal protein uS2 family.

Its subcellular location is the plastid. It is found in the chloroplast. The protein is Small ribosomal subunit protein uS2c (rps2) of Jasminum nudiflorum (Winter jasmine).